The primary structure comprises 127 residues: Major sperm protein 78 (127 aa).

N-acetylalanine is present on Ala2. One can recognise an MSP domain in the interval 9 to 126 (DIQTQPGTKI…RRKNLPIEYN (118 aa)).

As to expression, sperm.

The protein localises to the cell projection. Its subcellular location is the pseudopodium. It localises to the cytoplasm. The protein resides in the cytoskeleton. Its function is as follows. Central component in molecular interactions underlying sperm crawling. Forms an extensive filament system that extends from sperm villipoda, along the leading edge of the pseudopod. This Caenorhabditis elegans protein is Major sperm protein 78 (msp-78).